Reading from the N-terminus, the 293-residue chain is MTAVPAHDHHTLQDFIERHQRLFVLTGAGCSTDSGIPDYRDLQGGWKRPQPVTFQAFMGELSTRQRYWARSLVGWPRFGLAQPNATHHALAALEARGQLEVLLTQNVDRLHQAAGSQAVIDLHGRLDVVRCMGCERRMPRTEFQVLLEQANPGWAALEAAQAPDGDADLDDVAFEHFVVPPCPVCGGVLKPNVVFFGENVPRARVERAFAHLQAADAVLVVGSSLMVYSGFRFVQTAARNGLPIAALNFGRTRADELLTLKVEQSCAQALAFLHAPPHLPRARSVNDASARSA.

A Deacetylase sirtuin-type domain is found at 5-282 (PAHDHHTLQD…LHAPPHLPRA (278 aa)). Residues 27 to 47 (GAGC…GGWK) and 105 to 108 (QNVD) contribute to the NAD(+) site. Histidine 123 acts as the Proton acceptor in catalysis. The Zn(2+) site is built by cysteine 131, cysteine 134, cysteine 182, and cysteine 185. Residues 222 to 224 (GSS), 248 to 250 (NFG), and cysteine 266 each bind NAD(+).

Belongs to the sirtuin family. Class II subfamily. Zn(2+) is required as a cofactor.

The protein localises to the cytoplasm. It catalyses the reaction N(6)-acetyl-L-lysyl-[protein] + NAD(+) + H2O = 2''-O-acetyl-ADP-D-ribose + nicotinamide + L-lysyl-[protein]. Its function is as follows. NAD-dependent protein deacetylase which modulates the activities of several enzymes which are inactive in their acetylated form. In Xanthomonas axonopodis pv. citri (strain 306), this protein is NAD-dependent protein deacetylase.